Here is a 464-residue protein sequence, read N- to C-terminus: Protein phosphatase 2C homolog 2 (464 aa).

The region spanning 23 to 292 (AFGLCAMQGW…DNMSIVVVAL (270 aa)) is the PPM-type phosphatase domain. The Mn(2+) site is built by Asp62, Gly63, Asp234, and Asp283. The tract at residues 174 to 355 (DGFVEMDRVN…KPQDKFTRDH (182 aa)) is interaction with IRE1. Disordered stretches follow at residues 361–398 (SVTA…TSGP) and 434–464 (QLLQ…SHLQ). Positions 366–384 (DNDDPMDIDDTDADTDAEN) are enriched in acidic residues. Residues Thr376 and Thr380 each carry the phosphothreonine modification. Positions 386–396 (DPSSQSKSKTS) are enriched in polar residues. Residues 448-458 (PENDSNTDHKA) are compositionally biased toward basic and acidic residues.

This sequence belongs to the PP2C family. Interacts with IRE1 (when phosphorylated); the interaction is direct and serves to attenuate the endoplasmic reticulum unfolded protein response. Interacts (when phosphorylated) with RAD53 (via domain FHA 1); the interaction is direct and serves to regulate DNA damage checkpoint signaling. Interacts with the ATG17-ATG29-ATG31 and ATG1-ATG13 supercomplex; to regulate induction of autophagy. Mg(2+) serves as cofactor. The cofactor is Mn(2+).

The protein resides in the nucleus. It localises to the cytoplasm. It is found in the cytosol. It catalyses the reaction O-phospho-L-seryl-[protein] + H2O = L-seryl-[protein] + phosphate. The enzyme catalyses O-phospho-L-threonyl-[protein] + H2O = L-threonyl-[protein] + phosphate. Dephosphorylating regulator for many key proteins. Dephosphorylates the cell cycle master regulator CDC28/cyclin-dependent kinase 1; its activity appears redundant with phosphatase PTC3. Dephosphorylates HOG1 at 'Thr-171', to attenuate activation of the stress-activated p38MAPK cascade; its activity appears redundant with phosphatase PTC3. Positively regulates both nonselective macroautophagy as well as the selective cytoplasm-to-vacuole (cvt) autophagy pathway and the genotoxin-induced targeted autophagy (GTA) pathway, possibly by dephosphorylating ATG13 to enable the interaction between the ATG17-ATG29-ATG31 and ATG1-ATG13 complexes; its activity appears redundant with phosphatase PTC3. Dephosphorylates RAD53, to regulate DNA damage checkpoint signaling. Dephosphorylates IRE1, to negatively regulate the endoplasmic reticulum unfolded protein response. The polypeptide is Protein phosphatase 2C homolog 2 (PTC2) (Saccharomyces cerevisiae (strain ATCC 204508 / S288c) (Baker's yeast)).